The chain runs to 305 residues: Translation initiation factor eIF2B subunit alpha (305 aa).

Belongs to the eIF-2B alpha/beta/delta subunits family. Component of the translation initiation factor 2B (eIF2B) complex which is a heterodecamer of two sets of five different subunits: alpha, beta, gamma, delta and epsilon. Subunits alpha, beta and delta comprise a regulatory subcomplex and subunits epsilon and gamma comprise a catalytic subcomplex. Within the complex, the hexameric regulatory complex resides at the center, with the two heterodimeric catalytic subcomplexes bound on opposite sides.

It is found in the cytoplasm. The protein localises to the cytosol. In terms of biological role, acts as a component of the translation initiation factor 2B (eIF2B) complex, which catalyzes the exchange of GDP for GTP on eukaryotic initiation factor 2 (eIF2) gamma subunit. Its guanine nucleotide exchange factor activity is repressed when bound to eIF2 complex phosphorylated on the alpha subunit, thereby limiting the amount of methionyl-initiator methionine tRNA available to the ribosome and consequently global translation is repressed. The protein is Translation initiation factor eIF2B subunit alpha of Caenorhabditis elegans.